The sequence spans 188 residues: Dual specificity protein phosphatase 18 (188 aa).

A Tyrosine-protein phosphatase domain is found at 19 to 160 (GLSQITKSLF…LIHYELQLFG (142 aa)). Residues 95–141 (MQKGRTLLHCAAGVSRSAALCLAYLMKYHAMSLVDAHTWTKSCRPII) form a sufficient for mitochondrial localization region. Catalysis depends on Cys104, which acts as the Phosphocysteine intermediate.

It belongs to the protein-tyrosine phosphatase family. Non-receptor class dual specificity subfamily.

The protein resides in the cytoplasm. The protein localises to the nucleus. It is found in the mitochondrion inner membrane. The catalysed reaction is O-phospho-L-tyrosyl-[protein] + H2O = L-tyrosyl-[protein] + phosphate. The enzyme catalyses O-phospho-L-seryl-[protein] + H2O = L-seryl-[protein] + phosphate. It carries out the reaction O-phospho-L-threonyl-[protein] + H2O = L-threonyl-[protein] + phosphate. Can dephosphorylate single and diphosphorylated synthetic MAPK peptides, with preference for the phosphotyrosine and diphosphorylated forms over phosphothreonine. In vitro, dephosphorylates p-nitrophenyl phosphate (pNPP). This is Dual specificity protein phosphatase 18 (Dusp18) from Mus musculus (Mouse).